Reading from the N-terminus, the 151-residue chain is Small ribosomal subunit protein uS15 (151 aa).

It belongs to the universal ribosomal protein uS15 family.

The protein is Small ribosomal subunit protein uS15 (RpS13) of Choristoneura parallela (Spotted fireworm moth).